We begin with the raw amino-acid sequence, 436 residues long: Homeobox protein PKNOX1 (436 aa).

The segment at 23 to 50 (ELKTEQDPNCSDPDAEGVSPPPIESQTP) is disordered. Phosphoserine is present on residues serine 33 and serine 41. One can recognise an MEIS N-terminal domain in the interval 80-163 (GSEGTTSASF…MNSETLLSGE (84 aa)). A DNA-binding region (homeobox; TALE-type) is located at residues 259–321 (SKNKRGVLPK…NARRRILQPM (63 aa)). Positions 401 to 436 (AGQSEDESVDSTEDEGGALAPTHISGLVLENSDSLQ) are disordered. The span at 404-416 (SEDESVDSTEDEG) shows a compositional bias: acidic residues.

It belongs to the TALE/MEIS homeobox family. As to quaternary structure, interacts with MN1.

The protein resides in the nucleus. Activates transcription in the presence of PBX1A and HOXA1. In terms of biological role, (Microbial infection) In complex with PBX1, binds to the 5'-TGATTGAC-3' consensus sequence in the U5 region of Moloney murine leukemia virus and promotes viral transcription. The chain is Homeobox protein PKNOX1 from Mus musculus (Mouse).